Reading from the N-terminus, the 724-residue chain is Probable methyltransferase PMT28 (724 aa).

The Cytoplasmic portion of the chain corresponds to 1 to 22 (MMERKREMGIAYFARRIKQPRG). A helical; Signal-anchor for type II membrane protein membrane pass occupies residues 23–43 (IWVKMTFIVVLGLCFVFFWSF). The Lumenal portion of the chain corresponds to 44–724 (LSSSASTFNV…LCAQKTLWRP (681 aa)). Positions 63 to 211 (EPVSSRTKSA…ISKKRKRKGP (149 aa)) are disordered. Positions 71 to 98 (SAHEVSESSKLHERGKVESGSKSKEGKK) are enriched in basic and acidic residues. Over residues 107 to 125 (HETKKKKEHAVSHPHKKKD) the composition is skewed to basic residues. A compositionally biased stretch (basic and acidic residues) spans 126–140 (VPKPVVEEVVVKEDQ). Positions 141-173 (EHEEAESDDSDQSNKEDGEEGTESDGNEGESDG) are enriched in acidic residues. Residues N305, N316, and N568 are each glycosylated (N-linked (GlcNAc...) asparagine).

Belongs to the methyltransferase superfamily.

The protein localises to the golgi apparatus membrane. In Arabidopsis thaliana (Mouse-ear cress), this protein is Probable methyltransferase PMT28.